Consider the following 534-residue polypeptide: Zinc finger protein 703-A (534 aa).

Disordered regions lie at residues 1 to 35, 90 to 251, and 300 to 320; these read MNCS…THPV, SQIG…VAPV, and QLPG…LTGA. 3 stretches are compositionally biased toward low complexity: residues 15–34, 115–124, and 146–155; these read QSSS…PTHP, RSSSLKLGES, and GSSAGGSADK. The span at 173–182 shows a compositional bias: polar residues; that stretch reads SPSSRVSSPG. Over residues 185–200 the composition is skewed to basic and acidic residues; that stretch reads CDSKNNESQEKKEPEA. Positions 204-217 are enriched in polar residues; that stretch reads SLETSQANPTLTRA. The span at 218-229 shows a compositional bias: low complexity; it reads SISNSSAESSQS. A compositionally biased stretch (polar residues) spans 230 to 239; sequence GDVTPSSKSD. The C2H2-type zinc finger occupies 406–434; it reads HICNWVSASGPCDKRFATSEELLAHLRTH.

The protein belongs to the Elbow/Noc family.

It is found in the nucleus. The protein localises to the cytoplasm. Functionally, transcriptional corepressor which does not bind directly to DNA and may regulate transcription through recruitment of histone deacetylases to gene promoters. Regulates cell adhesion, migration and proliferation. Involved in specification of the lateral neural plate border (NPB). May be required for segmental gene expression during hindbrain development. This is Zinc finger protein 703-A (znf703-a) from Xenopus laevis (African clawed frog).